The following is a 154-amino-acid chain: 6,7-dimethyl-8-ribityllumazine synthase (154 aa).

Residues Phe-22, 56 to 58, and 80 to 82 contribute to the 5-amino-6-(D-ribitylamino)uracil site; these read AFE and AVI. 85-86 lines the (2S)-2-hydroxy-3-oxobutyl phosphate pocket; it reads AT. Catalysis depends on His-88, which acts as the Proton donor. Position 113 (Phe-113) interacts with 5-amino-6-(D-ribitylamino)uracil. Arg-127 provides a ligand contact to (2S)-2-hydroxy-3-oxobutyl phosphate.

Belongs to the DMRL synthase family.

It catalyses the reaction (2S)-2-hydroxy-3-oxobutyl phosphate + 5-amino-6-(D-ribitylamino)uracil = 6,7-dimethyl-8-(1-D-ribityl)lumazine + phosphate + 2 H2O + H(+). Its pathway is cofactor biosynthesis; riboflavin biosynthesis; riboflavin from 2-hydroxy-3-oxobutyl phosphate and 5-amino-6-(D-ribitylamino)uracil: step 1/2. Its function is as follows. Catalyzes the formation of 6,7-dimethyl-8-ribityllumazine by condensation of 5-amino-6-(D-ribitylamino)uracil with 3,4-dihydroxy-2-butanone 4-phosphate. This is the penultimate step in the biosynthesis of riboflavin. The polypeptide is 6,7-dimethyl-8-ribityllumazine synthase (Desulfitobacterium hafniense (strain DSM 10664 / DCB-2)).